The following is a 470-amino-acid chain: MTGKEKKLWGGRFQEKPSSILERIGESVSFDHKLYKEDIQGSIAHARMLKQIGILSGDELSKIETSLLQIKTELEEGKLEFKSELEDIHMHIESRLTELIGETGKKLHTARSRNDQVTQDVRLYILGRGKEILKSIVSLRFSLYEKAKRSVDVIIPGYTHLQVAQPIRASQYLLSWFWALERDQEFFRFALKASDELALGGGAMAGVNYATDREFLKKELGLSKVSPNSMDGVSSRDHILEFLFACTQLMIHASRICEDIILYSSQEFGILKLSDSLTTGSSIMPQKKNPDIAELIRGKAGRVIGNLNHLLVMLKGLPSTYNRDLQEDKLALFDSVETVEISLEGIREMIEDWVWVPERAESSLKNGFATATDLADFLVYEKKVPFRTAHELVGTLVRVCVEQKRTLFDLPEPDRIAVSEHFVGKEYENAVSLSLSADKKISYGGTSKKRQEEQLKIALESLKQTETLFL.

Belongs to the lyase 1 family. Argininosuccinate lyase subfamily.

The protein localises to the cytoplasm. It catalyses the reaction 2-(N(omega)-L-arginino)succinate = fumarate + L-arginine. Its pathway is amino-acid biosynthesis; L-arginine biosynthesis; L-arginine from L-ornithine and carbamoyl phosphate: step 3/3. This Leptospira borgpetersenii serovar Hardjo-bovis (strain L550) protein is Argininosuccinate lyase.